A 378-amino-acid polypeptide reads, in one-letter code: Erythronate-4-phosphate dehydrogenase (378 aa).

Positions 45 and 66 each coordinate substrate. Asp-146 and Thr-175 together coordinate NAD(+). Arg-208 is an active-site residue. Asp-232 contacts NAD(+). The active site involves Glu-237. His-254 serves as the catalytic Proton donor. Gly-257 is an NAD(+) binding site. Tyr-258 is a substrate binding site.

Belongs to the D-isomer specific 2-hydroxyacid dehydrogenase family. PdxB subfamily. Homodimer.

It localises to the cytoplasm. The enzyme catalyses 4-phospho-D-erythronate + NAD(+) = (R)-3-hydroxy-2-oxo-4-phosphooxybutanoate + NADH + H(+). The protein operates within cofactor biosynthesis; pyridoxine 5'-phosphate biosynthesis; pyridoxine 5'-phosphate from D-erythrose 4-phosphate: step 2/5. Its function is as follows. Catalyzes the oxidation of erythronate-4-phosphate to 3-hydroxy-2-oxo-4-phosphonooxybutanoate. The chain is Erythronate-4-phosphate dehydrogenase from Escherichia coli O45:K1 (strain S88 / ExPEC).